A 540-amino-acid chain; its full sequence is Glucose-6-phosphate isomerase (540 aa).

Glu-350 (proton donor) is an active-site residue. Residues His-381 and Lys-503 contribute to the active site.

The protein belongs to the GPI family.

The protein resides in the cytoplasm. It carries out the reaction alpha-D-glucose 6-phosphate = beta-D-fructose 6-phosphate. It participates in carbohydrate biosynthesis; gluconeogenesis. The protein operates within carbohydrate degradation; glycolysis; D-glyceraldehyde 3-phosphate and glycerone phosphate from D-glucose: step 2/4. Its function is as follows. Catalyzes the reversible isomerization of glucose-6-phosphate to fructose-6-phosphate. This Burkholderia mallei (strain NCTC 10247) protein is Glucose-6-phosphate isomerase.